We begin with the raw amino-acid sequence, 554 residues long: Methyl-coenzyme M reductase II subunit alpha (554 aa).

Residue Gln-151 participates in coenzyme F430 binding. Coenzyme B is bound by residues Arg-229, 260–261, and Arg-274; that span reads KH. Residues Tyr-336 and Tyr-447 each contribute to the coenzyme M site.

Belongs to the methyl-coenzyme M reductase alpha subunit family. MCR is a hexamer of two alpha, two beta, and two gamma chains, forming a dimer of heterotrimers. The cofactor is coenzyme F430.

It carries out the reaction coenzyme B + methyl-coenzyme M = methane + coenzyme M-coenzyme B heterodisulfide. Its pathway is one-carbon metabolism; methyl-coenzyme M reduction; methane from methyl-coenzyme M: step 1/1. Its function is as follows. Component of the methyl-coenzyme M reductase (MCR) I that catalyzes the reductive cleavage of methyl-coenzyme M (CoM-S-CH3 or 2-(methylthio)ethanesulfonate) using coenzyme B (CoB or 7-mercaptoheptanoylthreonine phosphate) as reductant which results in the production of methane and the mixed heterodisulfide of CoB and CoM (CoM-S-S-CoB). This is the final step in methanogenesis. The sequence is that of Methyl-coenzyme M reductase II subunit alpha (mrtA) from Methanothermus fervidus (strain ATCC 43054 / DSM 2088 / JCM 10308 / V24 S).